Consider the following 392-residue polypeptide: Pannexin-3 (392 aa).

Residues 1-39 (MSLAHTAAEYMLSDALLPDRRGSRLKGLRLELPLDKMVK) are Cytoplasmic-facing. Residues 40–60 (FITVGFPLLLMSLAFAQEFSS) traverse the membrane as a helical segment. Topologically, residues 61–113 (GSPISCFSPSNFSVRQAAYVDSSCWDSLAHHTQDKAGQYKVKSLWPHKALPYS) are extracellular. A glycan (N-linked (GlcNAc...) asparagine) is linked at Asn71. The helical transmembrane segment at 114 to 134 (LLALAVAMYLPVLLWQYVAVP) threads the bilayer. The Cytoplasmic portion of the chain corresponds to 135–215 (SLSSDLLFII…VATYLLRNAL (81 aa)). A helical membrane pass occupies residues 216–236 (LLLFTSATYLYLGQFHLDVFF). Residues 237 to 267 (QDEFNCFIKTGLLHDETHVPELITCRLTSLS) lie on the Extracellular side of the membrane. Residues 268 to 288 (VFQIVSVSSAAIYTILVPVII) form a helical membrane-spanning segment. Over 289 to 392 (YNLTRLCRWD…LTQHTYDEHA (104 aa)) the chain is Cytoplasmic.

Belongs to the pannexin family. In terms of assembly, homoheptameric. N-glycosylation may play a role in cell surface targeting. As to expression, expressed in skin, cartilage, heart, lung, liver, spleen, thymus and kidney. Not expressed in brain. Expressed in calvarial cells.

It localises to the cell membrane. The protein localises to the endoplasmic reticulum membrane. It carries out the reaction Ca(2+)(in) = Ca(2+)(out). The catalysed reaction is ATP(in) = ATP(out). Regulator of osteoblast differentiation by functionning as a Ca(2+) channel in the endoplasmic reticulum which regulates calmodulin (CaM) pathways. Allows ATP release into the extracellular space and activation or purinergic receptors. The protein is Pannexin-3 (Panx3) of Mus musculus (Mouse).